The following is a 266-amino-acid chain: Secreted RxLR effector protein 128 (266 aa).

An N-terminal signal peptide occupies residues 1 to 18 (MRGAFYTAIALLIGRSQT). Residues 48–63 (RYLRDGLAHSATNEER) carry the RxLR-dEER motif.

This sequence belongs to the RxLR effector family.

It localises to the secreted. The protein localises to the host nucleus. Its function is as follows. Secreted effector that dos not suppress the host cell death induced by cell death-inducing proteins. This is Secreted RxLR effector protein 128 from Plasmopara viticola (Downy mildew of grapevine).